Here is a 155-residue protein sequence, read N- to C-terminus: 6,7-dimethyl-8-ribityllumazine synthase (155 aa).

Residues phenylalanine 23, 57–59 (AFE), and 83–85 (AVI) each bind 5-amino-6-(D-ribitylamino)uracil. 88–89 (AT) is a binding site for (2S)-2-hydroxy-3-oxobutyl phosphate. The active-site Proton donor is the histidine 91. Phenylalanine 114 provides a ligand contact to 5-amino-6-(D-ribitylamino)uracil. Residue arginine 128 participates in (2S)-2-hydroxy-3-oxobutyl phosphate binding.

It belongs to the DMRL synthase family.

The enzyme catalyses (2S)-2-hydroxy-3-oxobutyl phosphate + 5-amino-6-(D-ribitylamino)uracil = 6,7-dimethyl-8-(1-D-ribityl)lumazine + phosphate + 2 H2O + H(+). Its pathway is cofactor biosynthesis; riboflavin biosynthesis; riboflavin from 2-hydroxy-3-oxobutyl phosphate and 5-amino-6-(D-ribitylamino)uracil: step 1/2. Its function is as follows. Catalyzes the formation of 6,7-dimethyl-8-ribityllumazine by condensation of 5-amino-6-(D-ribitylamino)uracil with 3,4-dihydroxy-2-butanone 4-phosphate. This is the penultimate step in the biosynthesis of riboflavin. This is 6,7-dimethyl-8-ribityllumazine synthase from Leptospira biflexa serovar Patoc (strain Patoc 1 / Ames).